We begin with the raw amino-acid sequence, 314 residues long: ATP synthase gamma chain (314 aa).

This sequence belongs to the ATPase gamma chain family. As to quaternary structure, F-type ATPases have 2 components, CF(1) - the catalytic core - and CF(0) - the membrane proton channel. CF(1) has five subunits: alpha(3), beta(3), gamma(1), delta(1), epsilon(1). CF(0) has three main subunits: a, b and c.

It is found in the cellular thylakoid membrane. Its function is as follows. Produces ATP from ADP in the presence of a proton gradient across the membrane. The gamma chain is believed to be important in regulating ATPase activity and the flow of protons through the CF(0) complex. This Gloeothece citriformis (strain PCC 7424) (Cyanothece sp. (strain PCC 7424)) protein is ATP synthase gamma chain.